A 685-amino-acid polypeptide reads, in one-letter code: Diphthine--ammonia ligase (685 aa).

In the C-terminal section; belongs to the RutC family. This sequence in the N-terminal section; belongs to the Diphthine--ammonia ligase family. As to quaternary structure, interacts with elongation factor 2 (eEF-2; EFT1 or EFT2).

It is found in the cytoplasm. It carries out the reaction diphthine-[translation elongation factor 2] + NH4(+) + ATP = diphthamide-[translation elongation factor 2] + AMP + diphosphate + H(+). The protein operates within protein modification; peptidyl-diphthamide biosynthesis. Amidase that catalyzes the last step of diphthamide biosynthesis using ammonium and ATP. Diphthamide biosynthesis consists in the conversion of an L-histidine residue in the translation elongation factor eEF-2 (EFT1 or EFT2) to diphthamide. This is Diphthine--ammonia ligase (DPH6) from Saccharomyces cerevisiae (strain ATCC 204508 / S288c) (Baker's yeast).